Reading from the N-terminus, the 435-residue chain is Hexane cyclase xenF (435 aa).

The first 23 residues, Met1 to Ala23, serve as a signal peptide directing secretion. Residues Asn81 and Asn156 are each glycosylated (N-linked (GlcNAc...) asparagine).

This sequence belongs to the Diels-Alderase family.

The protein operates within mycotoxin biosynthesis. Its function is as follows. Hexane cyclase; part of the gene cluster that mediates the biosynthesis of xenoacremones such as xenoacremone A, a compound that shows inhibitory activity toward the PI3K/AKT signaling pathway and which has the ability to induce apoptosis of A549 lung cancer cells. Within the pathway, cooperation of the hybrid PKS-NRPS xenE and the trans-acting enoyl reductase xenG is responsible for the formation of the reduced tyrosine-nonaketide derivative. The alpha/beta hydrolase xenA then accelerates intramolecular nucleophilic attack to give a pyrrolidone derivative. Subsequently, three enzymes, xenF, xenD, and xenC, coordinately participate in the conversion to xenoacremone B. XenF catalyzes sigmatropic rearrangement to form an A-ring, which leads to an unusual intermediate with a hexane ring, which is required for the formation of the tricarbocyclic product. Epoxidation catalyzed by xenD and the formation of the paracyclophane ether catalyzed by xenC initiate a spontaneous intramolecular Diels-Alder (IMDA) reaction to yield xenoacremone B. Spontaneous hydration of xenoacremone B leads to the formation of xenoacremone A, which undergoes subsequent methylation to afford xenoacremone C. The protein is Hexane cyclase xenF of Xenoacremonium sinensis (Endophyte fungus).